Here is a 526-residue protein sequence, read N- to C-terminus: Anthranilate synthase component 1 (526 aa).

Residues Ser40 and Pro304–Met306 contribute to the L-tryptophan site. Gly341–Thr342 serves as a coordination point for chorismate. Glu374 lines the Mg(2+) pocket. Residues Tyr461, Arg481, Gly495–Gly497, and Gly497 each bind chorismate. Mg(2+) is bound at residue Glu510.

Belongs to the anthranilate synthase component I family. As to quaternary structure, heterotetramer consisting of two non-identical subunits: a beta subunit (TrpG) and a large alpha subunit (TrpE). Requires Mg(2+) as cofactor.

It catalyses the reaction chorismate + L-glutamine = anthranilate + pyruvate + L-glutamate + H(+). The protein operates within amino-acid biosynthesis; L-tryptophan biosynthesis; L-tryptophan from chorismate: step 1/5. With respect to regulation, feedback inhibited by tryptophan. In terms of biological role, part of a heterotetrameric complex that catalyzes the two-step biosynthesis of anthranilate, an intermediate in the biosynthesis of L-tryptophan. In the first step, the glutamine-binding beta subunit (TrpG) of anthranilate synthase (AS) provides the glutamine amidotransferase activity which generates ammonia as a substrate that, along with chorismate, is used in the second step, catalyzed by the large alpha subunit of AS (TrpE) to produce anthranilate. In the absence of TrpG, TrpE can synthesize anthranilate directly from chorismate and high concentrations of ammonia. This Buchnera aphidicola subsp. Tetraneura caerulescens protein is Anthranilate synthase component 1 (trpE).